The following is a 305-amino-acid chain: UDP-3-O-acyl-N-acetylglucosamine deacetylase (305 aa).

His79, His238, and Asp242 together coordinate Zn(2+). Residue His265 is the Proton donor of the active site.

It belongs to the LpxC family. The cofactor is Zn(2+).

It carries out the reaction a UDP-3-O-[(3R)-3-hydroxyacyl]-N-acetyl-alpha-D-glucosamine + H2O = a UDP-3-O-[(3R)-3-hydroxyacyl]-alpha-D-glucosamine + acetate. The protein operates within glycolipid biosynthesis; lipid IV(A) biosynthesis; lipid IV(A) from (3R)-3-hydroxytetradecanoyl-[acyl-carrier-protein] and UDP-N-acetyl-alpha-D-glucosamine: step 2/6. Catalyzes the hydrolysis of UDP-3-O-myristoyl-N-acetylglucosamine to form UDP-3-O-myristoylglucosamine and acetate, the committed step in lipid A biosynthesis. In Haemophilus influenzae (strain 86-028NP), this protein is UDP-3-O-acyl-N-acetylglucosamine deacetylase.